The following is a 282-amino-acid chain: Shikimate dehydrogenase (NADP(+)) (282 aa).

Shikimate is bound by residues 19–21 and threonine 66; that span reads SFS. Lysine 70 acts as the Proton acceptor in catalysis. Shikimate-binding residues include asparagine 91 and aspartate 106. NADP(+) is bound by residues 130–134, 152–157, threonine 196, methionine 200, and leucine 224; these read GAGGA and NRTVEK. Position 226 (tyrosine 226) interacts with shikimate. NADP(+) is bound at residue glycine 247.

It belongs to the shikimate dehydrogenase family. As to quaternary structure, homodimer.

The catalysed reaction is shikimate + NADP(+) = 3-dehydroshikimate + NADPH + H(+). It participates in metabolic intermediate biosynthesis; chorismate biosynthesis; chorismate from D-erythrose 4-phosphate and phosphoenolpyruvate: step 4/7. Functionally, involved in the biosynthesis of the chorismate, which leads to the biosynthesis of aromatic amino acids. Catalyzes the reversible NADPH linked reduction of 3-dehydroshikimate (DHSA) to yield shikimate (SA). The polypeptide is Shikimate dehydrogenase (NADP(+)) (Methanocaldococcus jannaschii (strain ATCC 43067 / DSM 2661 / JAL-1 / JCM 10045 / NBRC 100440) (Methanococcus jannaschii)).